The following is a 394-amino-acid chain: Quinolinate synthase (394 aa).

Residues H67 and S84 each contribute to the iminosuccinate site. Position 131 (C131) interacts with [4Fe-4S] cluster. Iminosuccinate is bound by residues 163-165 (YMN) and S184. C254 contributes to the [4Fe-4S] cluster binding site. Iminosuccinate-binding positions include 280 to 282 (HPE) and T297. C346 serves as a coordination point for [4Fe-4S] cluster.

Belongs to the quinolinate synthase family. Type 3 subfamily. The cofactor is [4Fe-4S] cluster.

It localises to the cytoplasm. The enzyme catalyses iminosuccinate + dihydroxyacetone phosphate = quinolinate + phosphate + 2 H2O + H(+). The protein operates within cofactor biosynthesis; NAD(+) biosynthesis; quinolinate from iminoaspartate: step 1/1. Catalyzes the condensation of iminoaspartate with dihydroxyacetone phosphate to form quinolinate. The protein is Quinolinate synthase of Streptomyces coelicolor (strain ATCC BAA-471 / A3(2) / M145).